The sequence spans 157 residues: MGDLEGQDRPDPISTMVGPSGTGNLRLTSFQQVRRSILSQERRNPAPLATCTKKKLGRKEEPLLIPATINNYRRAIHLKNGARISLDVGLYFFRRARFGTLKQDMIYIIRHHRRLEIKVRFIALLIQACCRIVGYDYLFFYEVRNHLLLAALLIIIR.

A compositionally biased stretch (basic and acidic residues) spans 1 to 11; it reads MGDLEGQDRPD. Positions 1–22 are disordered; sequence MGDLEGQDRPDPISTMVGPSGT.

It is found in the mitochondrion. This is an uncharacterized protein from Arabidopsis thaliana (Mouse-ear cress).